The following is a 252-amino-acid chain: Imidazole glycerol phosphate synthase subunit HisF (252 aa).

Active-site residues include aspartate 11 and aspartate 130.

This sequence belongs to the HisA/HisF family. Heterodimer of HisH and HisF.

It is found in the cytoplasm. The enzyme catalyses 5-[(5-phospho-1-deoxy-D-ribulos-1-ylimino)methylamino]-1-(5-phospho-beta-D-ribosyl)imidazole-4-carboxamide + L-glutamine = D-erythro-1-(imidazol-4-yl)glycerol 3-phosphate + 5-amino-1-(5-phospho-beta-D-ribosyl)imidazole-4-carboxamide + L-glutamate + H(+). It functions in the pathway amino-acid biosynthesis; L-histidine biosynthesis; L-histidine from 5-phospho-alpha-D-ribose 1-diphosphate: step 5/9. Its function is as follows. IGPS catalyzes the conversion of PRFAR and glutamine to IGP, AICAR and glutamate. The HisF subunit catalyzes the cyclization activity that produces IGP and AICAR from PRFAR using the ammonia provided by the HisH subunit. The polypeptide is Imidazole glycerol phosphate synthase subunit HisF (Lactiplantibacillus plantarum (strain ATCC BAA-793 / NCIMB 8826 / WCFS1) (Lactobacillus plantarum)).